The primary structure comprises 622 residues: 1-deoxy-D-xylulose-5-phosphate synthase (622 aa).

Thiamine diphosphate contacts are provided by residues His80 and 121 to 123; that span reads GHS. Mg(2+) is bound at residue Asp152. Residues 153 to 154, Asn181, Tyr288, and Glu370 contribute to the thiamine diphosphate site; that span reads GA. A Mg(2+)-binding site is contributed by Asn181.

This sequence belongs to the transketolase family. DXPS subfamily. Homodimer. Mg(2+) is required as a cofactor. Requires thiamine diphosphate as cofactor.

The catalysed reaction is D-glyceraldehyde 3-phosphate + pyruvate + H(+) = 1-deoxy-D-xylulose 5-phosphate + CO2. Its pathway is metabolic intermediate biosynthesis; 1-deoxy-D-xylulose 5-phosphate biosynthesis; 1-deoxy-D-xylulose 5-phosphate from D-glyceraldehyde 3-phosphate and pyruvate: step 1/1. In terms of biological role, catalyzes the acyloin condensation reaction between C atoms 2 and 3 of pyruvate and glyceraldehyde 3-phosphate to yield 1-deoxy-D-xylulose-5-phosphate (DXP). In Shewanella amazonensis (strain ATCC BAA-1098 / SB2B), this protein is 1-deoxy-D-xylulose-5-phosphate synthase.